The chain runs to 100 residues: Aspartyl/glutamyl-tRNA(Asn/Gln) amidotransferase subunit C (100 aa).

It belongs to the GatC family. In terms of assembly, heterotrimer of A, B and C subunits.

The enzyme catalyses L-glutamyl-tRNA(Gln) + L-glutamine + ATP + H2O = L-glutaminyl-tRNA(Gln) + L-glutamate + ADP + phosphate + H(+). It carries out the reaction L-aspartyl-tRNA(Asn) + L-glutamine + ATP + H2O = L-asparaginyl-tRNA(Asn) + L-glutamate + ADP + phosphate + 2 H(+). In terms of biological role, allows the formation of correctly charged Asn-tRNA(Asn) or Gln-tRNA(Gln) through the transamidation of misacylated Asp-tRNA(Asn) or Glu-tRNA(Gln) in organisms which lack either or both of asparaginyl-tRNA or glutaminyl-tRNA synthetases. The reaction takes place in the presence of glutamine and ATP through an activated phospho-Asp-tRNA(Asn) or phospho-Glu-tRNA(Gln). The chain is Aspartyl/glutamyl-tRNA(Asn/Gln) amidotransferase subunit C from Rickettsia africae (strain ESF-5).